Here is a 133-residue protein sequence, read N- to C-terminus: DUF35 domain-containing scaffold protein (133 aa).

Cys-23, Cys-26, Cys-37, and Cys-40 together coordinate Zn(2+).

The protein belongs to the scaffold protein DUF35 family. In terms of assembly, interacts with acetoacetyl-CoA thiolase and HMG-CoA synthase (HMGCS) that catalyzes the first and second step in the mevalonate pathway, respectively.

Functionally, functions as a scaffold to connect the acetoacetyl-CoA thiolase and HMG-CoA synthase (HMGCS) dimers in the channeling thiolase/HMGCS complex, which allows for efficient coupling of the endergonic thiolase reaction with the exergonic HMGCS reaction. The chain is DUF35 domain-containing scaffold protein from Methanothermobacter thermautotrophicus (strain ATCC 29096 / DSM 1053 / JCM 10044 / NBRC 100330 / Delta H) (Methanobacterium thermoautotrophicum).